Consider the following 405-residue polypeptide: Squamosa promoter-binding-like protein 6 (405 aa).

The segment at 121–198 adopts an SBP-type zinc-finger fold; sequence NPLCQVYGCS…AGHNERRRKP (78 aa). Zn(2+) contacts are provided by C124, C129, C146, H149, C165, C168, H172, and C184. The short motif at 181–197 is the Bipartite nuclear localization signal element; the sequence is KRSCRRRLAGHNERRRK.

It depends on Zn(2+) as a cofactor.

The protein resides in the nucleus. In terms of biological role, trans-acting factor that binds specifically to the consensus nucleotide sequence 5'-TNCGTACAA-3'. This chain is Squamosa promoter-binding-like protein 6 (SPL6), found in Arabidopsis thaliana (Mouse-ear cress).